Consider the following 879-residue polypeptide: DNA methyltransferase A (879 aa).

This sequence belongs to the methyltransferase superfamily.

It carries out the reaction a 2'-deoxyadenosine in DNA + S-adenosyl-L-methionine = an N(6)-methyl-2'-deoxyadenosine in DNA + S-adenosyl-L-homocysteine + H(+). Functionally, recognizes the double-stranded sequence 5'-GACGAG-3' and methylates A-5, yielding m6A. m6A methylation functions as a transcriptional modifier, promoting transcription of a number of genes (at least scpA, hbs, rnhC, yumC and zapA). One studied mechanism is via transcriptional repressor ScoC (also called hpr) which binds to non-methylated scpA promoter; when the m6A target is methylated ScoC no longer binds and scpA transcription is up-regulated. Other mechanisms for gene expression regulation probably exist. Binds DNA with and without the target sequence. Although it resembles a restriction-modification system, it does not have detectable endonuclease activity under tested conditions. A gamma subtype methylase. The protein is DNA methyltransferase A of Bacillus subtilis (strain 168).